The sequence spans 549 residues: Glucose-6-phosphate isomerase (549 aa).

E355 acts as the Proton donor in catalysis. Active-site residues include H386 and K514.

This sequence belongs to the GPI family.

Its subcellular location is the cytoplasm. It catalyses the reaction alpha-D-glucose 6-phosphate = beta-D-fructose 6-phosphate. It participates in carbohydrate biosynthesis; gluconeogenesis. Its pathway is carbohydrate degradation; glycolysis; D-glyceraldehyde 3-phosphate and glycerone phosphate from D-glucose: step 2/4. In terms of biological role, catalyzes the reversible isomerization of glucose-6-phosphate to fructose-6-phosphate. The polypeptide is Glucose-6-phosphate isomerase (Salmonella typhi).